The chain runs to 407 residues: Amylovoran biosynthesis glycosyltransferase AmsK (407 aa).

Belongs to the glycosyltransferase group 1 family. Glycosyltransferase 4 subfamily.

The protein operates within glycan metabolism; exopolysaccharide biosynthesis. Its function is as follows. Involved in the biosynthesis of amylovoran which functions as a virulence factor. This is Amylovoran biosynthesis glycosyltransferase AmsK (amsK) from Erwinia amylovora (Fire blight bacteria).